Here is a 335-residue protein sequence, read N- to C-terminus: Acetyl-coenzyme A carboxylase carboxyl transferase subunit alpha (335 aa).

Residues 48 to 308 form the CoA carboxyltransferase C-terminal domain; the sequence is VLESKVDALR…KSLLVEELRM (261 aa).

It belongs to the AccA family. As to quaternary structure, acetyl-CoA carboxylase is a heterohexamer composed of biotin carboxyl carrier protein (AccB), biotin carboxylase (AccC) and two subunits each of ACCase subunit alpha (AccA) and ACCase subunit beta (AccD).

The protein localises to the cytoplasm. It carries out the reaction N(6)-carboxybiotinyl-L-lysyl-[protein] + acetyl-CoA = N(6)-biotinyl-L-lysyl-[protein] + malonyl-CoA. Its pathway is lipid metabolism; malonyl-CoA biosynthesis; malonyl-CoA from acetyl-CoA: step 1/1. In terms of biological role, component of the acetyl coenzyme A carboxylase (ACC) complex. First, biotin carboxylase catalyzes the carboxylation of biotin on its carrier protein (BCCP) and then the CO(2) group is transferred by the carboxyltransferase to acetyl-CoA to form malonyl-CoA. The protein is Acetyl-coenzyme A carboxylase carboxyl transferase subunit alpha of Chlorobium phaeobacteroides (strain BS1).